We begin with the raw amino-acid sequence, 374 residues long: MLGIARRRLGSGCALGQLMQALRPAAAAAAARTYSAAAKEMTVREALNSALDEEMSADPSVFLMGEEVGEYQGAYKISKGLLDKYGPDRVLDTPITEAGFTGIGVGAAYQGLRPVVEFMTFNFSMQAIDHIINSAAKSNYMSAGQINVPIVFRGPNGAAAGVGAQHSQCYAAWYAHVPGLKVLTPYSAEDARGLLKAAIRDPDPVVFLENELLYGESFPVSAEVLDSSFCLPIGKAKIEQEGKDVTITAFSKMVGYALQAAEILSKEGISAEVINLRSIRPLDRATINASVRKTNRLVTLEEGFPQHGVGAEICMSVVEDSFEYLDAPVERIAGADVPMPYAANLERMAVPQVEDIVRAAKRACYRAVPMAATA.

The transit peptide at 1 to 34 (MLGIARRRLGSGCALGQLMQALRPAAAAAAARTY) directs the protein to the mitochondrion. E97 provides a ligand contact to thiamine diphosphate. K(+) contacts are provided by I150, A198, I199, and D201.

In terms of assembly, tetramer of 2 alpha and 2 beta subunits. Thiamine diphosphate serves as cofactor.

The protein resides in the mitochondrion matrix. The catalysed reaction is N(6)-[(R)-lipoyl]-L-lysyl-[protein] + pyruvate + H(+) = N(6)-[(R)-S(8)-acetyldihydrolipoyl]-L-lysyl-[protein] + CO2. The pyruvate dehydrogenase complex catalyzes the overall conversion of pyruvate to acetyl-CoA and CO(2). It contains multiple copies of three enzymatic components: pyruvate dehydrogenase (E1), dihydrolipoamide acetyltransferase (E2) and lipoamide dehydrogenase (E3). The polypeptide is Pyruvate dehydrogenase E1 component subunit beta-1, mitochondrial (Oryza sativa subsp. japonica (Rice)).